The sequence spans 266 residues: Elongator complex protein 6 (266 aa).

Belongs to the ELP6 family. In terms of assembly, component of the elongator complex which consists of ELP1, ELP2, ELP3, ELP4, ELP5 and ELP6.

Its subcellular location is the cytoplasm. It localises to the nucleus. It functions in the pathway tRNA modification; 5-methoxycarbonylmethyl-2-thiouridine-tRNA biosynthesis. In terms of biological role, component of the elongator complex which is required for multiple tRNA modifications, including mcm5U (5-methoxycarbonylmethyl uridine), mcm5s2U (5-methoxycarbonylmethyl-2-thiouridine), and ncm5U (5-carbamoylmethyl uridine). The elongator complex catalyzes formation of carboxymethyluridine in the wobble base at position 34 in tRNAs. Involved in cell migration. This chain is Elongator complex protein 6 (Elp6), found in Rattus norvegicus (Rat).